We begin with the raw amino-acid sequence, 934 residues long: 2-oxoglutarate dehydrogenase E1 component (934 aa).

This sequence belongs to the alpha-ketoglutarate dehydrogenase family. Homodimer. Part of the 2-oxoglutarate dehydrogenase (OGDH) complex composed of E1 (2-oxoglutarate dehydrogenase), E2 (dihydrolipoamide succinyltransferase) and E3 (dihydrolipoamide dehydrogenase); the complex contains multiple copies of the three enzymatic components (E1, E2 and E3). Requires thiamine diphosphate as cofactor.

The catalysed reaction is N(6)-[(R)-lipoyl]-L-lysyl-[protein] + 2-oxoglutarate + H(+) = N(6)-[(R)-S(8)-succinyldihydrolipoyl]-L-lysyl-[protein] + CO2. Its function is as follows. E1 component of the 2-oxoglutarate dehydrogenase (OGDH) complex which catalyzes the decarboxylation of 2-oxoglutarate, the first step in the conversion of 2-oxoglutarate to succinyl-CoA and CO(2). This chain is 2-oxoglutarate dehydrogenase E1 component (sucA), found in Coxiella burnetii (strain RSA 493 / Nine Mile phase I).